The primary structure comprises 486 residues: Glucose-6-phosphate 1-dehydrogenase (486 aa).

NADP(+) is bound by residues Gly13–Lys20, Arg47, Asp86–Val87, and Lys149. Substrate-binding residues include His179, Lys183, Glu217, and Asp236. His241 acts as the Proton acceptor in catalysis. Lys339 and Lys344 together coordinate substrate.

The protein belongs to the glucose-6-phosphate dehydrogenase family. As to quaternary structure, homodimer.

The catalysed reaction is D-glucose 6-phosphate + NAD(+) = 6-phospho-D-glucono-1,5-lactone + NADH + H(+). The enzyme catalyses D-glucose 6-phosphate + NADP(+) = 6-phospho-D-glucono-1,5-lactone + NADPH + H(+). It participates in carbohydrate degradation; pentose phosphate pathway; D-ribulose 5-phosphate from D-glucose 6-phosphate (oxidative stage): step 1/3. In terms of biological role, catalyzes the oxidation of glucose 6-phosphate to 6-phosphogluconolactone. Can utilize either NADP(+) or NAD(+). The chain is Glucose-6-phosphate 1-dehydrogenase from Leuconostoc mesenteroides.